The sequence spans 83 residues: Apolipoprotein C-I, basic form (83 aa).

Positions 1–26 (MRLFLSLPVLVVVLSIVLEGPAPAQG) are cleaved as a signal peptide.

The protein belongs to the apolipoprotein C1 family.

It is found in the secreted. In terms of biological role, inhibitor of lipoprotein binding to the low density lipoprotein (LDL) receptor, LDL receptor-related protein, and very low density lipoprotein (VLDL) receptor. Associates with high density lipoproteins (HDL) and the triacylglycerol-rich lipoproteins in the plasma and makes up about 10% of the protein of the VLDL and 2% of that of HDL. Appears to interfere directly with fatty acid uptake and is also the major plasma inhibitor of cholesteryl ester transfer protein (CETP). Binds free fatty acids and reduces their intracellular esterification. Modulates the interaction of APOE with beta-migrating VLDL and inhibits binding of beta-VLDL to the LDL receptor-related protein. The protein is Apolipoprotein C-I, basic form (APOC1B) of Pan troglodytes (Chimpanzee).